We begin with the raw amino-acid sequence, 77 residues long: Conotoxin ArMKLT2-022 (77 aa).

An N-terminal signal peptide occupies residues 1-22 (MKLTCVLIVAVLFLTACQLIAA). A propeptide spanning residues 23 to 46 (DDSRDLKRFSRRKMRDGMLNTKNT) is cleaved from the precursor. Gln-49 carries the pyrrolidone carboxylic acid modification. 3 cysteine pairs are disulfide-bonded: Cys-50–Cys-65, Cys-57–Cys-68, and Cys-64–Cys-73.

The protein belongs to the conotoxin O1 superfamily. As to expression, expressed by the venom duct.

It is found in the secreted. This chain is Conotoxin ArMKLT2-022, found in Conus arenatus (Sand-dusted cone).